Here is a 362-residue protein sequence, read N- to C-terminus: Ferrochelatase (362 aa).

H228 and E309 together coordinate Fe cation.

The protein belongs to the ferrochelatase family.

Its subcellular location is the cytoplasm. It carries out the reaction heme b + 2 H(+) = protoporphyrin IX + Fe(2+). Its pathway is porphyrin-containing compound metabolism; protoheme biosynthesis; protoheme from protoporphyrin-IX: step 1/1. In terms of biological role, catalyzes the ferrous insertion into protoporphyrin IX. This chain is Ferrochelatase, found in Bordetella bronchiseptica (strain ATCC BAA-588 / NCTC 13252 / RB50) (Alcaligenes bronchisepticus).